Here is an 834-residue protein sequence, read N- to C-terminus: WPP domain-associated protein (834 aa).

3 coiled-coil regions span residues 410–456 (SFGN…RLQH), 574–700 (SLDT…VLAI), and 792–812 (AEAE…LVEK).

As to quaternary structure, interacts with MAF1. As to expression, expressed in seedlings, leaves and fruits.

The protein localises to the golgi apparatus. Its subcellular location is the cytoplasm. The protein is WPP domain-associated protein (WAP) of Solanum lycopersicum (Tomato).